Here is a 259-residue protein sequence, read N- to C-terminus: Ribosomal RNA small subunit methyltransferase A (259 aa).

S-adenosyl-L-methionine is bound by residues asparagine 13, leucine 15, glycine 40, glutamate 61, aspartate 85, and asparagine 103.

The protein belongs to the class I-like SAM-binding methyltransferase superfamily. rRNA adenine N(6)-methyltransferase family. RsmA subfamily.

Its subcellular location is the cytoplasm. It carries out the reaction adenosine(1518)/adenosine(1519) in 16S rRNA + 4 S-adenosyl-L-methionine = N(6)-dimethyladenosine(1518)/N(6)-dimethyladenosine(1519) in 16S rRNA + 4 S-adenosyl-L-homocysteine + 4 H(+). Its function is as follows. Specifically dimethylates two adjacent adenosines (A1518 and A1519) in the loop of a conserved hairpin near the 3'-end of 16S rRNA in the 30S particle. May play a critical role in biogenesis of 30S subunits. This is Ribosomal RNA small subunit methyltransferase A from Neisseria meningitidis serogroup A / serotype 4A (strain DSM 15465 / Z2491).